We begin with the raw amino-acid sequence, 217 residues long: Probable nicotinate-nucleotide adenylyltransferase (217 aa).

It belongs to the NadD family.

The enzyme catalyses nicotinate beta-D-ribonucleotide + ATP + H(+) = deamido-NAD(+) + diphosphate. It functions in the pathway cofactor biosynthesis; NAD(+) biosynthesis; deamido-NAD(+) from nicotinate D-ribonucleotide: step 1/1. Catalyzes the reversible adenylation of nicotinate mononucleotide (NaMN) to nicotinic acid adenine dinucleotide (NaAD). This Dechloromonas aromatica (strain RCB) protein is Probable nicotinate-nucleotide adenylyltransferase.